Here is a 251-residue protein sequence, read N- to C-terminus: MKEVPMILEICVDDVAGLEAAVRGGADRIELCAALSGGGVTPSAGFMQRAATYGLPVSVMIRPRAGDFVFTHDEADVMKRDIDAARAAGLSGVVLGASRGDGSLDMALLEDLRRHADGMDATLHRAFDVAPDMEEALEAAISLGFPRILTSGGARSALEGVKTLARLSELAKGRIVIMPGAGVRPQSVQALLDSFPITEIHASCSAVPLYDPESRVAKLGFTGAGRKATDEAAVRELKTILSAHHKGGATL.

This sequence belongs to the CutC family.

It is found in the cytoplasm. The sequence is that of PF03932 family protein CutC from Agrobacterium fabrum (strain C58 / ATCC 33970) (Agrobacterium tumefaciens (strain C58)).